Consider the following 566-residue polypeptide: Mucin-21 (566 aa).

Residues 1 to 24 (MKMQKGNVLLMFGLLLHLEAATNS) form the signal peptide. Asparagine 25 carries N-linked (GlcNAc...) asparagine glycosylation. A disordered region spans residues 25-68 (NETSTSANTGSSVISSGASTATNSGSSVTSSGVSTATISGSSVT). The Extracellular segment spans residues 25 to 479 (NETSTSANTG…KPGGSLVPWE (455 aa)). A run of 28 repeats spans residues 31–44 (ANTG…GAST), 45–59 (ATNS…GVST), 60–74 (ATIS…GVSI), 75–89 (VTNS…GIST), 90–104 (ATNS…GISI), 105–119 (ATNS…GAST), 120–134 (ATNS…GAST), 135–149 (ATNS…GAST), 150–164 (ATNS…EAST), 165–179 (ATNS…GAST), 180–194 (ATNS…RAST), 195–209 (ATNS…GAST), 210–224 (ATNS…GAGT), 225–239 (ATNS…GAST), 244–254 (ESSTPSSGAGT), 255–269 (ATNS…GAGT), 270–284 (ATNS…GIST), 285–299 (VTNS…GANT), 300–314 (ATNS…GANT), 315–329 (ATNS…GAST), 330–344 (ATNS…GAST), 345–359 (ATNS…GAST), 360–374 (ATNS…GTST), 375–389 (ATNS…GAST), 390–404 (ATTS…GAST), 405–419 (ATNS…GAST), 420–434 (ATNS…GANT), and 435–449 (ATNS…GSGT). The 28 X 15 AA approximate tandem repeats stretch occupies residues 31–435 (ANTGSSVISS…STTSSGANTA (405 aa)). Residues 106-456 (TNSESSTTSS…SGTAALTGMH (351 aa)) are disordered. Residues 480–500 (IFLITLVSVVAAVGLFAGLFF) traverse the membrane as a helical segment. The Cytoplasmic portion of the chain corresponds to 501–566 (CVRNSLSLRN…MEMSGRNSGP (66 aa)). The tract at residues 521 to 566 (GLNHGLGPGPGGNHGAPHRPRWSPNWFWRRPVSSIAMEMSGRNSGP) is cytoplasmic tail.

Post-translationally, O-glycosylated. As to expression, expressed in lung, large intestine, thymus, and testis. Expressed in normal and malignant bronchial epithelial cells.

The protein resides in the cell membrane. The sequence is that of Mucin-21 (MUC21) from Homo sapiens (Human).